The sequence spans 328 residues: tRNA-modifying protein YgfZ (328 aa).

Residues W28 and W190 each contribute to the folate site.

The protein belongs to the tRNA-modifying YgfZ family.

It is found in the cytoplasm. Its function is as follows. Folate-binding protein involved in regulating the level of ATP-DnaA and in the modification of some tRNAs. It is probably a key factor in regulatory networks that act via tRNA modification, such as initiation of chromosomal replication. This is tRNA-modifying protein YgfZ from Sodalis glossinidius (strain morsitans).